Here is a 456-residue protein sequence, read N- to C-terminus: tRNA modification GTPase MnmE (456 aa).

Arg-24, Glu-81, and Lys-120 together coordinate (6S)-5-formyl-5,6,7,8-tetrahydrofolate. The TrmE-type G domain occupies 216–379 (GMKVVIAGRP…LREHLKECIG (164 aa)). Asn-226 contacts K(+). Residues 226 to 231 (NAGKSS), 245 to 251 (TAIEGTT), and 270 to 273 (DTAG) each bind GTP. Position 230 (Ser-230) interacts with Mg(2+). K(+)-binding residues include Thr-245, Ile-247, and Thr-250. Residue Thr-251 coordinates Mg(2+). Residue Lys-456 coordinates (6S)-5-formyl-5,6,7,8-tetrahydrofolate.

It belongs to the TRAFAC class TrmE-Era-EngA-EngB-Septin-like GTPase superfamily. TrmE GTPase family. In terms of assembly, homodimer. Heterotetramer of two MnmE and two MnmG subunits. The cofactor is K(+).

The protein localises to the cytoplasm. Exhibits a very high intrinsic GTPase hydrolysis rate. Involved in the addition of a carboxymethylaminomethyl (cmnm) group at the wobble position (U34) of certain tRNAs, forming tRNA-cmnm(5)s(2)U34. This Marinobacter nauticus (strain ATCC 700491 / DSM 11845 / VT8) (Marinobacter aquaeolei) protein is tRNA modification GTPase MnmE.